We begin with the raw amino-acid sequence, 389 residues long: S-adenosylmethionine synthase (389 aa).

His-19 serves as a coordination point for ATP. Asp-21 is a Mg(2+) binding site. Glu-47 provides a ligand contact to K(+). 2 residues coordinate L-methionine: Glu-60 and Gln-103. Positions 103-113 (QSGDIAQGVDR) are flexible loop. ATP is bound by residues 168–170 (DGK), 234–235 (RF), Asp-243, 249–250 (RK), Ala-266, and Lys-270. Position 243 (Asp-243) interacts with L-methionine. Residue Lys-274 participates in L-methionine binding.

It belongs to the AdoMet synthase family. As to quaternary structure, homotetramer; dimer of dimers. Requires Mg(2+) as cofactor. It depends on K(+) as a cofactor.

Its subcellular location is the cytoplasm. The catalysed reaction is L-methionine + ATP + H2O = S-adenosyl-L-methionine + phosphate + diphosphate. The protein operates within amino-acid biosynthesis; S-adenosyl-L-methionine biosynthesis; S-adenosyl-L-methionine from L-methionine: step 1/1. Functionally, catalyzes the formation of S-adenosylmethionine (AdoMet) from methionine and ATP. The overall synthetic reaction is composed of two sequential steps, AdoMet formation and the subsequent tripolyphosphate hydrolysis which occurs prior to release of AdoMet from the enzyme. In Nitratidesulfovibrio vulgaris (strain DSM 19637 / Miyazaki F) (Desulfovibrio vulgaris), this protein is S-adenosylmethionine synthase.